Reading from the N-terminus, the 972-residue chain is Protein NRDE2 homolog (972 aa).

Polar residues predominate over residues 1 to 17 (MPSNHNTSVPKFSSFNS). Residues 1 to 61 (MPSNHNTSVP…RSIQSNFAVD (61 aa)) are disordered. The span at 19 to 33 (KAKKNPITKSNKKYR) shows a compositional bias: basic residues. Over residues 37 to 59 (DQVSSNHAKSSFPSHRSIQSNFA) the composition is skewed to polar residues. HAT repeat units lie at residues 159–191 (LNILKAIKETDEEIKKNPGKARLWIKMCEYQER), 250–282 (WSKEETNQKFEEVLIEHPGYLNLWMKYAEYFTG), 318–350 (TDVTSNFEVEEAILHLLIRLCDFLKNCGYYELA), 355–386 (QANMELCYFYPRYLEKKLDSTFFESFSKFWNS), 608–640 (EEKPQVNKIVKKILKKYDSSVSVWNTYAQLEHL), 788–820 (YNLPKVRPFFEKGVTLFSANTAIWEVYIFFESK), and 860–894 (TNSQYFLRTLDITLNNEKLKSVAKFWRIYLKILNL). A Phosphoserine modification is found at Ser970.

The protein belongs to the NRDE2 family.

It is found in the nucleus. In Schizosaccharomyces pombe (strain 972 / ATCC 24843) (Fission yeast), this protein is Protein NRDE2 homolog.